The chain runs to 178 residues: Platelet inhibitor triplatin-2 (178 aa).

Residues 1–18 (MKMIISLTFLGILMLAFA) form the signal peptide. 3 disulfides stabilise this stretch: C25/C134, C60/C178, and C90/C106.

This sequence belongs to the calycin superfamily. Triabin family. Expressed in salivary glands.

The protein resides in the secreted. Inhibits platelet aggregation and vasoconstriction through binding to distinct eicosanoids involved in inflammation (acts as a scavenger), and has a role in inhibiting host innate immunity by impairing platelet-assisted formation of neutrophil extracellular traps (NETs). Inhibits platelet aggregation by collagen, and low doses of thromboxane A2 mimetic (TXA2 mimetic), and arachidonic acid (AA) without affecting aggregation induced by ADP, convulxin (GP6 agonist), and PMA. Binds to TXA2, TXB2, prostaglandine H2 mimetic (PGH2 mimetic), PGJ2, and PGF2alpha. Binding is not observed to leukotrienes, AA, and biogenic amines (PGE1, 5(S)-HETE, 12(S)-HETE, 20-HETE, norepinephrine, epinephrine, serotonin, LTC4 and ADP). Induces relaxation of aorta rat previously contracted with TXA2 mimetic. Moreover, it also impairs platelet-assisted formation of neutrophil extracellular traps (NETs). NETs are web-like structures of DNA and proteins that play an important role in killing of pathogens. In addition, NETs are implicated in thrombus formation. In vivo, this protein exhibits antithrombotic activity in two distinct mice models that are highly dependent on platelets. It is noteworthy that it inhibits thrombosis without promoting excessive bleeding. The sequence is that of Platelet inhibitor triplatin-2 from Triatoma infestans (Assassin bug).